The chain runs to 518 residues: 3-octaprenyl-4-hydroxybenzoate carboxy-lyase (518 aa).

N177 contributes to the Mn(2+) binding site. Prenylated FMN contacts are provided by residues 180–182, 194–196, and 199–200; these read IYR, RWL, and RG. E243 contributes to the Mn(2+) binding site. The active-site Proton donor is D318.

It belongs to the UbiD family. Homohexamer. Prenylated FMN is required as a cofactor. Mn(2+) serves as cofactor.

The protein localises to the cell membrane. It carries out the reaction a 4-hydroxy-3-(all-trans-polyprenyl)benzoate + H(+) = a 2-(all-trans-polyprenyl)phenol + CO2. Its pathway is cofactor biosynthesis; ubiquinone biosynthesis. Its function is as follows. Catalyzes the decarboxylation of 3-octaprenyl-4-hydroxy benzoate to 2-octaprenylphenol, an intermediate step in ubiquinone biosynthesis. This chain is 3-octaprenyl-4-hydroxybenzoate carboxy-lyase, found in Burkholderia lata (strain ATCC 17760 / DSM 23089 / LMG 22485 / NCIMB 9086 / R18194 / 383).